A 123-amino-acid chain; its full sequence is UPF0382 membrane protein YwdK (123 aa).

A run of 4 helical transmembrane segments spans residues 3 to 23, 49 to 69, 71 to 91, and 96 to 116; these read VFIILGAINALLAVGLGAFGA, ALGLFVVAFLADKLSGIGSVT, AGWLMFAGIVLFSGSLYILSV, and ILGAITPLGGVAFIISWIMIV.

The protein belongs to the UPF0382 family.

It is found in the cell membrane. The chain is UPF0382 membrane protein YwdK (ywdK) from Bacillus subtilis (strain 168).